Consider the following 504-residue polypeptide: Kinesin light chain 3 (504 aa).

Positions 90–150 (ALSAHVGALE…EEEKRHLEFL (61 aa)) form a coiled coil. The disordered stretch occupies residues 153–197 (LRQYDPPAESQQSESPPRRDSLASLFPSEEEERKGPEAAGAAAAQ). Residues 158–167 (PPAESQQSES) show a composition bias toward low complexity. Phosphoserine is present on S173. 5 TPR repeats span residues 207 to 240 (LRTLHNLVIQYAGQGRYEVAVPLCRQALEDLERS), 249 to 282 (ATMLNILALVYRDQNKYKEATDLLHDALQIREQT), 291 to 324 (AATLNNLAVLYGKRGRYREAEPLCQRALEIREKV), 333 to 366 (AKQLNNLALLCQNQGKFEDVERHYARALSIYEAL), and 375 to 408 (AKTKNNLASAYLKQNKYQQAEELYKEILHKEDLP). Positions 411-438 (LGAPNTGTAGDAEQALRRSSSLSKIRES) are disordered. S466 bears the Phosphoserine mark. T498 is modified (phosphothreonine). The residue at position 502 (S502) is a Phosphoserine.

The protein belongs to the kinesin light chain family. As to quaternary structure, oligomer composed of two heavy chains and two light chains. Associates with microtubulin in an ATP-dependent manner. Interacts with KIF5C. Interacts with ODF1. Interacts with LRGUK. Interacts with VDAC2.

It is found in the cytoplasm. The protein localises to the cytoskeleton. Its subcellular location is the mitochondrion. Kinesin is a microtubule-associated force-producing protein that may play a role in organelle transport. Plays a role during spermiogenesis in the development of the sperm tail midpiece and in the normal function of spermatozoa. May play a role in the formation of the mitochondrial sheath formation in the developing spermatid midpiece. The polypeptide is Kinesin light chain 3 (KLC3) (Pongo abelii (Sumatran orangutan)).